The primary structure comprises 470 residues: Bifunctional protein ArgHA (470 aa).

An argininosuccinate lyase region spans residues Met1 to Arg470.

It in the N-terminal section; belongs to the lyase 1 family. Argininosuccinate lyase subfamily. The protein in the C-terminal section; belongs to the acetyltransferase family. ArgA subfamily.

It is found in the cytoplasm. The catalysed reaction is 2-(N(omega)-L-arginino)succinate = fumarate + L-arginine. It catalyses the reaction L-glutamate + acetyl-CoA = N-acetyl-L-glutamate + CoA + H(+). Its pathway is amino-acid biosynthesis; L-arginine biosynthesis; N(2)-acetyl-L-ornithine from L-glutamate: step 1/4. It functions in the pathway amino-acid biosynthesis; L-arginine biosynthesis; L-arginine from L-ornithine and carbamoyl phosphate: step 3/3. The sequence is that of Bifunctional protein ArgHA (argHA) from Moritella profunda.